We begin with the raw amino-acid sequence, 298 residues long: Succinate dehydrogenase [ubiquinone] iron-sulfur subunit, mitochondrial (298 aa).

Residues 59–147 form the 2Fe-2S ferredoxin-type domain; the sequence is YRFNPEAPGA…STKIYPLPHM (89 aa). C107, C112, C115, and C127 together coordinate [2Fe-2S] cluster. The 4Fe-4S ferredoxin-type domain maps to 190–220; sequence ERDRLDGLYECILCACCSTSCPSYWWNADKY. [4Fe-4S] cluster-binding residues include C200, C203, and C206. [3Fe-4S] cluster is bound at residue C210. Residue W215 coordinates a ubiquinone. [3Fe-4S] cluster-binding residues include C257 and C263. C267 serves as a coordination point for [4Fe-4S] cluster.

Belongs to the succinate dehydrogenase/fumarate reductase iron-sulfur protein family. In terms of assembly, component of complex II composed of four subunits: a flavoprotein (FP), an iron-sulfur protein (IP), and a cytochrome b composed of a large and a small subunit. [2Fe-2S] cluster serves as cofactor. Requires [3Fe-4S] cluster as cofactor. It depends on [4Fe-4S] cluster as a cofactor.

Its subcellular location is the mitochondrion inner membrane. It catalyses the reaction a quinone + succinate = fumarate + a quinol. It participates in carbohydrate metabolism; tricarboxylic acid cycle; fumarate from succinate (eukaryal route): step 1/1. Functionally, iron-sulfur protein (IP) subunit of succinate dehydrogenase (SDH) that is involved in complex II of the mitochondrial electron transport chain and is responsible for transferring electrons from succinate to ubiquinone (coenzyme Q). This chain is Succinate dehydrogenase [ubiquinone] iron-sulfur subunit, mitochondrial (sdhb-1), found in Caenorhabditis elegans.